A 785-amino-acid chain; its full sequence is Endonuclease MutS2 (785 aa).

334 to 341 is an ATP binding site; that stretch reads GPNTGGKT. A Smr domain is found at 710-785; the sequence is LDLRGKRYEE…GNGATIVHFK (76 aa).

It belongs to the DNA mismatch repair MutS family. MutS2 subfamily. Homodimer. Binds to stalled ribosomes, contacting rRNA.

Endonuclease that is involved in the suppression of homologous recombination and thus may have a key role in the control of bacterial genetic diversity. Its function is as follows. Acts as a ribosome collision sensor, splitting the ribosome into its 2 subunits. Detects stalled/collided 70S ribosomes which it binds and splits by an ATP-hydrolysis driven conformational change. Acts upstream of the ribosome quality control system (RQC), a ribosome-associated complex that mediates the extraction of incompletely synthesized nascent chains from stalled ribosomes and their subsequent degradation. Probably generates substrates for RQC. This is Endonuclease MutS2 from Pediococcus pentosaceus (strain ATCC 25745 / CCUG 21536 / LMG 10740 / 183-1w).